The sequence spans 229 residues: Cytochrome c oxidase subunit 2 (229 aa).

Residues 1-26 (MATWAQLNFQDAASPMMEQLHYFHDH) lie on the Mitochondrial intermembrane side of the membrane. A helical membrane pass occupies residues 27-48 (TMMVLVIITIMVAYIMGTMFFN). The Mitochondrial matrix segment spans residues 49 to 62 (KDVNRYLLDGQKIE). The helical transmembrane segment at 63–82 (TEWTIVPVFVLVIIAMPSLR) threads the bilayer. The Mitochondrial intermembrane portion of the chain corresponds to 83–229 (LLYLLDEVNE…INWIQNMSEA (147 aa)). Residues H161, C196, E198, C200, H204, and M207 each contribute to the Cu cation site. E198 is a Mg(2+) binding site.

It belongs to the cytochrome c oxidase subunit 2 family. In terms of assembly, component of the cytochrome c oxidase (complex IV, CIV), a multisubunit enzyme composed of a catalytic core of 3 subunits and several supernumerary subunits. The complex exists as a monomer or a dimer and forms supercomplexes (SCs) in the inner mitochondrial membrane with ubiquinol-cytochrome c oxidoreductase (cytochrome b-c1 complex, complex III, CIII). The cofactor is Cu cation.

It is found in the mitochondrion inner membrane. It catalyses the reaction 4 Fe(II)-[cytochrome c] + O2 + 8 H(+)(in) = 4 Fe(III)-[cytochrome c] + 2 H2O + 4 H(+)(out). Component of the cytochrome c oxidase, the last enzyme in the mitochondrial electron transport chain which drives oxidative phosphorylation. The respiratory chain contains 3 multisubunit complexes succinate dehydrogenase (complex II, CII), ubiquinol-cytochrome c oxidoreductase (cytochrome b-c1 complex, complex III, CIII) and cytochrome c oxidase (complex IV, CIV), that cooperate to transfer electrons derived from NADH and succinate to molecular oxygen, creating an electrochemical gradient over the inner membrane that drives transmembrane transport and the ATP synthase. Cytochrome c oxidase is the component of the respiratory chain that catalyzes the reduction of oxygen to water. Electrons originating from reduced cytochrome c in the intermembrane space (IMS) are transferred via the dinuclear copper A center (CU(A)) of subunit 2 and heme A of subunit 1 to the active site in subunit 1, a binuclear center (BNC) formed by heme A3 and copper B (CU(B)). The BNC reduces molecular oxygen to 2 water molecules using 4 electrons from cytochrome c in the IMS and 4 protons from the mitochondrial matrix. The polypeptide is Cytochrome c oxidase subunit 2 (COII) (Sympetrum striolatum (Common darter dragonfly)).